Consider the following 599-residue polypeptide: Elongation factor 4 (599 aa).

In terms of domain architecture, tr-type G spans 2-184 (KNIRNFSIIA…RLVRDIPPPE (183 aa)). Residues 14–19 (DHGKST) and 131–134 (NKID) each bind GTP.

It belongs to the TRAFAC class translation factor GTPase superfamily. Classic translation factor GTPase family. LepA subfamily.

It localises to the cell inner membrane. It carries out the reaction GTP + H2O = GDP + phosphate + H(+). Required for accurate and efficient protein synthesis under certain stress conditions. May act as a fidelity factor of the translation reaction, by catalyzing a one-codon backward translocation of tRNAs on improperly translocated ribosomes. Back-translocation proceeds from a post-translocation (POST) complex to a pre-translocation (PRE) complex, thus giving elongation factor G a second chance to translocate the tRNAs correctly. Binds to ribosomes in a GTP-dependent manner. This chain is Elongation factor 4, found in Shigella dysenteriae serotype 1 (strain Sd197).